Reading from the N-terminus, the 306-residue chain is MLRFDFPGVSIGAAHYEEGPTGATVIHIPAGARTAVDARGGAVGLSGGYDFNHAICLAGGAGYGLEAGAGVSGALLERLEYRTGFAELQLVSSAVIYDFSARSTAVYPDKALGRAALEFAVPGEFPQGRAGAGMSASAGKVDWDRTEITGQGAAFRRLGDVRILAVVVPNPVGVIVDRAGTVVRGNYDAQTGVRRHPVFDYQEAFAEQVPPVTEAGNTTISAIVTNVRMSPVELNQFAKQVHSSMHRGIQPFHTDMDGDTLFAVTTDEIDLPTTPGSSRGRLSVNATALGAIASEVMWDAVLEAGK.

The protein belongs to the peptidase S58 family.

The polypeptide is Putative NylC-analogous protein (Agromyces sp. (strain KY5R)).